A 426-amino-acid polypeptide reads, in one-letter code: Serine--tRNA ligase (426 aa).

233 to 235 (TSE) contacts L-serine. 264-266 (RSE) provides a ligand contact to ATP. Position 287 (E287) interacts with L-serine. Residue 351–354 (EISS) participates in ATP binding. S387 contacts L-serine.

Belongs to the class-II aminoacyl-tRNA synthetase family. Type-1 seryl-tRNA synthetase subfamily. Homodimer. The tRNA molecule binds across the dimer.

The protein resides in the cytoplasm. It carries out the reaction tRNA(Ser) + L-serine + ATP = L-seryl-tRNA(Ser) + AMP + diphosphate + H(+). The enzyme catalyses tRNA(Sec) + L-serine + ATP = L-seryl-tRNA(Sec) + AMP + diphosphate + H(+). The protein operates within aminoacyl-tRNA biosynthesis; selenocysteinyl-tRNA(Sec) biosynthesis; L-seryl-tRNA(Sec) from L-serine and tRNA(Sec): step 1/1. Catalyzes the attachment of serine to tRNA(Ser). Is also able to aminoacylate tRNA(Sec) with serine, to form the misacylated tRNA L-seryl-tRNA(Sec), which will be further converted into selenocysteinyl-tRNA(Sec). This chain is Serine--tRNA ligase, found in Xylella fastidiosa (strain M12).